The following is a 34-amino-acid chain: Photosystem II reaction center protein Y (34 aa).

Residues 1–4 lie on the Lumenal side of the membrane; that stretch reads MDIR. A helical membrane pass occupies residues 5 to 23; it reads LLIVLLPVLAAASWALYNI. Over 24–34 the chain is Stromal; it reads GRVALQQFRSM.

Belongs to the PsbY family. As to quaternary structure, PSII is composed of 1 copy each of membrane proteins PsbA, PsbB, PsbC, PsbD, PsbE, PsbF, PsbH, PsbI, PsbJ, PsbK, PsbL, PsbM, PsbT, PsbX, PsbY, PsbZ, Psb30/Ycf12, at least 3 peripheral proteins of the oxygen-evolving complex and a large number of cofactors. It forms dimeric complexes.

It is found in the plastid. The protein localises to the chloroplast thylakoid membrane. Its function is as follows. Loosely associated component of the core of photosystem II (PSII), it is not always seen in crystals. PSII is a light-driven water plastoquinone oxidoreductase, using light energy to abstract electrons from H(2)O, generating a proton gradient subsequently used for ATP formation. The sequence is that of Photosystem II reaction center protein Y from Gracilaria tenuistipitata var. liui (Red alga).